The sequence spans 89 residues: MALSVEEKAQIVNEYKQAEGDTGSPEVQVALLTANINKLQGHFKANGKDHHSRRGLIRMVNQRRKLLDYLKGKDTTRYSALIGRLGLRR.

The protein belongs to the universal ribosomal protein uS15 family. In terms of assembly, part of the 30S ribosomal subunit. Forms a bridge to the 50S subunit in the 70S ribosome, contacting the 23S rRNA.

In terms of biological role, one of the primary rRNA binding proteins, it binds directly to 16S rRNA where it helps nucleate assembly of the platform of the 30S subunit by binding and bridging several RNA helices of the 16S rRNA. Forms an intersubunit bridge (bridge B4) with the 23S rRNA of the 50S subunit in the ribosome. In Ectopseudomonas mendocina (strain ymp) (Pseudomonas mendocina), this protein is Small ribosomal subunit protein uS15.